Consider the following 179-residue polypeptide: Large ribosomal subunit protein uL5 (179 aa).

It belongs to the universal ribosomal protein uL5 family. In terms of assembly, part of the 50S ribosomal subunit; part of the 5S rRNA/L5/L18/L25 subcomplex. Contacts the 5S rRNA and the P site tRNA. Forms a bridge to the 30S subunit in the 70S ribosome.

Functionally, this is one of the proteins that bind and probably mediate the attachment of the 5S RNA into the large ribosomal subunit, where it forms part of the central protuberance. In the 70S ribosome it contacts protein S13 of the 30S subunit (bridge B1b), connecting the 2 subunits; this bridge is implicated in subunit movement. Contacts the P site tRNA; the 5S rRNA and some of its associated proteins might help stabilize positioning of ribosome-bound tRNAs. In Prochlorococcus marinus (strain MIT 9211), this protein is Large ribosomal subunit protein uL5.